Here is a 401-residue protein sequence, read N- to C-terminus: Beta-ketoadipyl-CoA thiolase (401 aa).

Cys-90 acts as the Acyl-thioester intermediate in catalysis. Active-site proton acceptor residues include His-357 and Cys-387.

The protein belongs to the thiolase-like superfamily. Thiolase family.

The catalysed reaction is succinyl-CoA + acetyl-CoA = 3-oxoadipyl-CoA + CoA. It participates in aromatic compound metabolism; beta-ketoadipate pathway; acetyl-CoA and succinyl-CoA from 3-oxoadipate: step 2/2. Catalyzes thiolytic cleavage of beta-ketoadipyl-CoA to succinyl-CoA and acetyl-CoA. The sequence is that of Beta-ketoadipyl-CoA thiolase (catF) from Acinetobacter baylyi (strain ATCC 33305 / BD413 / ADP1).